The following is a 230-amino-acid chain: Agamous-like MADS-box protein AGL11 (230 aa).

The region spanning Arg-3 to Tyr-57 is the MADS-box domain. One can recognise a K-box domain in the interval Ala-87–Tyr-177. The disordered stretch occupies residues Ser-211–Gly-230. Residues Asp-221–Gly-230 are compositionally biased toward basic and acidic residues.

In terms of assembly, interacts with AGL15 and AGL16.

The protein localises to the nucleus. In terms of biological role, probable transcription factor. Is required, together with TT16/AGL32 for the maternal control of endothelium formation, which is essential for female gametophyte development and fertilization, and seed formation. The polypeptide is Agamous-like MADS-box protein AGL11 (AGL11) (Arabidopsis thaliana (Mouse-ear cress)).